We begin with the raw amino-acid sequence, 179 residues long: Peptidyl-tRNA hydrolase (179 aa).

Y14 contacts tRNA. H19 (proton acceptor) is an active-site residue. 3 residues coordinate tRNA: Y61, N63, and N107.

It belongs to the PTH family. In terms of assembly, monomer.

Its subcellular location is the cytoplasm. The enzyme catalyses an N-acyl-L-alpha-aminoacyl-tRNA + H2O = an N-acyl-L-amino acid + a tRNA + H(+). In terms of biological role, hydrolyzes ribosome-free peptidyl-tRNAs (with 1 or more amino acids incorporated), which drop off the ribosome during protein synthesis, or as a result of ribosome stalling. Its function is as follows. Catalyzes the release of premature peptidyl moieties from peptidyl-tRNA molecules trapped in stalled 50S ribosomal subunits, and thus maintains levels of free tRNAs and 50S ribosomes. The protein is Peptidyl-tRNA hydrolase of Campylobacter lari (strain RM2100 / D67 / ATCC BAA-1060).